Here is a 365-residue protein sequence, read N- to C-terminus: RISC-loading complex subunit TARBP2 (365 aa).

3 sufficient for interaction with PRKRA regions span residues 22 to 105 (MLAA…EPAL), 151 to 233 (SPQQ…DARD), and 286 to 365 (LGAL…AGSK). Positions 30 to 97 (TPISLLQEYG…AEVALKHLKG (68 aa)) constitute a DRBM 1 domain. S151 carries the post-translational modification Phosphoserine. DRBM domains follow at residues 158–226 (NPVG…RVHT) and 292–360 (ACCS…YLRI). Residues 227-365 (VPLDARDGNE…QYLRIMAGSK (139 aa)) form a sufficient for interaction with DICER1 region.

It belongs to the TARBP2 family. Self-associates. Component of the RISC loading complex (RLC), or micro-RNA (miRNA) loading complex (miRLC), which is composed of DICER1, AGO2 and TARBP2. Note that the trimeric RLC/miRLC is also referred to as RISC. Interacts with EIF2AK2/PKR and inhibits its protein kinase activity. Interacts with DHX9. Interacts with DICER1 and PRKRA. Interacts with DICER1, AGO2, MOV10, EIF6 and RPL7A (60S ribosome subunit); they form a large RNA-induced silencing complex (RISC). Interacts with IRF7; this interaction prevents IRF7 phosphorylation and activation.

The protein resides in the cytoplasm. It localises to the perinuclear region. Its subcellular location is the nucleus. In terms of biological role, required for formation of the RNA induced silencing complex (RISC). Component of the RISC loading complex (RLC), also known as the micro-RNA (miRNA) loading complex (miRLC), which is composed of DICER1, AGO2 and TARBP2. Within the RLC/miRLC, DICER1 and TARBP2 are required to process precursor miRNAs (pre-miRNAs) to mature miRNAs and then load them onto AGO2. AGO2 bound to the mature miRNA constitutes the minimal RISC and may subsequently dissociate from DICER1 and TARBP2. May also play a role in the production of short interfering RNAs (siRNAs) from double-stranded RNA (dsRNA) by DICER1. Binds in vitro to the PRM1 3'-UTR. Seems to act as a repressor of translation. For some pre-miRNA substrates, may also alter the choice of cleavage site by DICER1. Negatively regulates IRF7-mediated IFN-beta signaling triggered by viral infection by inhibiting the phosphorylation of IRF7 and promoting its 'Lys'-48-linked ubiquitination and degradation. The chain is RISC-loading complex subunit TARBP2 (Tarbp2) from Mus musculus (Mouse).